The following is a 445-amino-acid chain: MWLLAAHQVLRKMQRRHSSNTDNIPPERSRSQALSPEASVDEGGVFESLKAETASPPALFSGLAGGLPASPFPAGLVLGSTAGGGDVFIPMPATRDEAGGRSAEGSTYHHRQAHHHFHHGAHRGGSLLQHVGGDHRGHSEEGVDEQPGTPAPALSELKAVISWLQKGLPFILILLAKLCFQHKLGIAVCIGMASTFAYANSTLREQVSLKEKRSVLVILWILAFLAGNTMYVLYTFSSQQLYSSLIFLKPNLETLDFFDLLWIVGIADFVLKYITIALKCLIVALPKIILAVKSKGKFYLVIEELSQLFRSLVPIQLWYKYIMGDDSSNSYFLGGVLIVLYSLCKSFDICGRVGGLRKALKLLCTSQNYGVRATGQQCTEAGAVCAICQAEFRDPMILLCQHVFCEECLCLWLDRERTCPLCRSVAVDTLRCWKDGATSAHLQVY.

Residues 1 to 183 (MWLLAAHQVL…LLAKLCFQHK (183 aa)) are Extracellular-facing. Positions 12–41 (KMQRRHSSNTDNIPPERSRSQALSPEASVD) are disordered. Residues 184–203 (LGIAVCIGMASTFAYANSTL) traverse the membrane as a helical segment. The Cytoplasmic portion of the chain corresponds to 204-215 (REQVSLKEKRSV). The chain crosses the membrane as a helical span at residues 216-236 (LVILWILAFLAGNTMYVLYTF). The Extracellular portion of the chain corresponds to 237–256 (SSQQLYSSLIFLKPNLETLD). The helical transmembrane segment at 257-277 (FFDLLWIVGIADFVLKYITIA) threads the bilayer. At 278–330 (LKCLIVALPKIILAVKSKGKFYLVIEELSQLFRSLVPIQLWYKYIMGDDSSNS) the chain is on the cytoplasmic side. A helical membrane pass occupies residues 331 to 351 (YFLGGVLIVLYSLCKSFDICG). The Extracellular segment spans residues 352-445 (RVGGLRKALK…GATSAHLQVY (94 aa)). The RING-type zinc-finger motif lies at 385-423 (CAICQAEFRDPMILLCQHVFCEECLCLWLDRERTCPLCR).

Its subcellular location is the membrane. E3 ubiquitin-protein ligase that negatively regulates IL3-dependent cellular responses through IL3RA ubiquitination and degradation by the proteasome, having an anti-inflammatory effect. The sequence is that of RING finger and transmembrane domain-containing protein 2 (Rnft2) from Mus musculus (Mouse).